The following is a 550-amino-acid chain: Carboxylesterase 4A (550 aa).

An N-terminal signal peptide occupies residues 1 to 20 (MNWILCLSLTLLLVVQTAWG). Cys88 and Cys116 form a disulfide bridge. Catalysis depends on Ser221, which acts as the Acyl-ester intermediate. Residues Cys273 and Cys284 are joined by a disulfide bond. The N-linked (GlcNAc...) asparagine glycan is linked to Asn276. The active-site Charge relay system is the Glu353. Asn386 carries N-linked (GlcNAc...) asparagine glycosylation. His465 functions as the Charge relay system in the catalytic mechanism.

The protein belongs to the type-B carboxylesterase/lipase family.

It localises to the secreted. Its function is as follows. Probable carboxylesterase. The sequence is that of Carboxylesterase 4A (CES4A) from Bos taurus (Bovine).